Reading from the N-terminus, the 1091-residue chain is Integrin alpha-6 (1091 aa).

A signal peptide spans 1–23; it reads MAVAGQLCLLYLSAGLLARLGTA. Residues 24–1011 lie on the Extracellular side of the membrane; sequence FNLDTREDNV…FPSKTVAQYS (988 aa). FG-GAP repeat units follow at residues 30-95, 101-166, 176-229, 244-300, 301-363, 364-419, and 420-479; these read EDNV…GPCT, NDAD…IEDD, DGRL…FFDM, DHDE…KSAH, LLPE…KWSN, VKPI…GIIT, and KPTQ…VTPN. Asn78 carries N-linked (GlcNAc...) asparagine glycosylation. Cystine bridges form between Cys86-Cys94, Cys131-Cys154, and Cys175-Cys188. 2 N-linked (GlcNAc...) asparagine glycosylation sites follow: Asn223 and Asn284. Ca(2+) is bound by residues Asp324, Asn326, Asp328, and Asp332. N-linked (GlcNAc...) asparagine glycosylation is present at Asn370. Residues Asp386, Asn388, Asp390, Tyr392, Asp394, Asp441, Asp443, Asn445, Tyr447, and Asp449 each contribute to the Ca(2+) site. 4 cysteine pairs are disulfide-bonded: Cys489–Cys496, Cys502–Cys562, Cys626–Cys632, and Cys726–Cys737. N-linked (GlcNAc...) asparagine glycans are attached at residues Asn731, Asn746, and Asn927. 2 disulfide bridges follow: Cys881/Cys928 and Cys934/Cys939. Asn958 carries an N-linked (GlcNAc...) asparagine glycan. A helical membrane pass occupies residues 1012–1037; the sequence is GVAWWIILLAVLAGILMLALLVFLLW. At 1038 to 1091 the chain is on the cytoplasmic side; the sequence is KCGFFKRSRYDDSIPRYHAVRIRKEEREIKDEKHMDNLEKKQWITKWNENESYS. The S-palmitoyl cysteine; by DHHC3 moiety is linked to residue Cys1039. The short motif at 1040-1044 is the GFFKR motif element; the sequence is GFFKR. Position 1064 is a phosphoserine (Arg1064).

The protein belongs to the integrin alpha chain family. In terms of assembly, heterodimer of an alpha and a beta subunit. The alpha subunit is composed of a heavy and a light chain linked by a disulfide bond. Alpha-6 associates with either beta-1 (ITGB1) or beta-4 (ITGB4) to form ITGA6:ITGB1 and ITGA6:ITGB4, respectively. ITGA6:ITGB1 is found in a complex with CD9; interaction takes place in oocytes and is involved in sperm-egg fusion. ITGA6:ITGB4 is found in a ternary complex with NRG1 and ERBB3. ITGA6:ITGB4 is found in a ternary complex with IGF1 and IGF1R. ITGA6:ITGB4 interacts with IGF2. Interacts with ADAM9. Interacts with RAB21. Interacts with MDK. ITGA6:ITGB1 interacts with MDK; this interaction mediates MDK-induced neurite outgrowth. Interacts with CD82; this interaction down-regulates ITGA6-mediated cell adhesion. Isoforms containing segment A, but not segment B, are the major targets for PMA-induced phosphorylation. Phosphorylation occurs on 'Ser-1064' of isoform alpha-6X1A. Phosphorylation is not required for the induction of integrin alpha-6A/beta-1 high affinity but may reduce the affinity for ligand. Post-translationally, undergoes PLAU-mediated cleavage at residues Arg-595-596-Arg in a time-dependent manner to produce processed integrin alpha-6 (alpha6p). In terms of processing, palmitoylation by DHHC3 enhances stability and cell surface expression. In terms of tissue distribution, expressed at low levels in normal skin tissue with elevated levels in skin tumors.

It localises to the cell membrane. Functionally, integrin alpha-6/beta-1 (ITGA6:ITGB1) is a receptor for laminin on platelets. Integrin alpha-6/beta-1 (ITGA6:ITGB1) is present in oocytes and is involved in sperm-egg fusion. Integrin alpha-6/beta-4 (ITGA6:ITGB4) is a receptor for laminin in epithelial cells and it plays a critical structural role in the hemidesmosome. ITGA6:ITGB4 binds to NRG1 (via EGF domain) and this binding is essential for NRG1-ERBB signaling. ITGA6:ITGB4 binds to IGF1 and this binding is essential for IGF1 signaling. ITGA6:ITGB4 binds to IGF2 and this binding is essential for IGF2 signaling. This Mus musculus (Mouse) protein is Integrin alpha-6 (Itga6).